The chain runs to 272 residues: ATP phosphoribosyltransferase regulatory subunit (272 aa).

This sequence belongs to the class-II aminoacyl-tRNA synthetase family. HisZ subfamily. As to quaternary structure, heteromultimer composed of HisG and HisZ subunits.

It is found in the cytoplasm. It participates in amino-acid biosynthesis; L-histidine biosynthesis; L-histidine from 5-phospho-alpha-D-ribose 1-diphosphate: step 1/9. Required for the first step of histidine biosynthesis. May allow the feedback regulation of ATP phosphoribosyltransferase activity by histidine. The chain is ATP phosphoribosyltransferase regulatory subunit from Staphylococcus aureus (strain Mu3 / ATCC 700698).